Consider the following 432-residue polypeptide: Alcohol acyltransferase 9 (432 aa).

Catalysis depends on proton acceptor residues H156 and D379.

It belongs to the plant acyltransferase family.

It carries out the reaction 2-(methylsulfanyl)acetyl-CoA + butan-1-ol = butyl 2-(methylsulfanyl)acetate + CoA. The catalysed reaction is ethanol + acetyl-CoA = ethyl acetate + CoA. The enzyme catalyses butan-1-ol + acetyl-CoA = butyl acetate + CoA. It catalyses the reaction butan-1-ol + propanoyl-CoA = butyl propanoate + CoA. Functionally, involved in the biosynthesis of volatile esters which confer kiwifruit flavor. Alcohol acyl transferase that can use a wide range of alcohols as substrate to produce esters. Exhibits acetyl-CoA:alcohol O-acyltransferase activity. This is Alcohol acyltransferase 9 from Actinidia chinensis var. chinensis (Chinese soft-hair kiwi).